The chain runs to 578 residues: GPI-anchor transamidase component PIGT (578 aa).

An N-terminal signal peptide occupies residues 1-21; it reads MAAAMPLALLVLLLLGPGGWC. The Lumenal portion of the chain corresponds to 22 to 525; it reads LAEPPRDSLR…NLPTPDFSMP (504 aa). N-linked (GlcNAc...) asparagine glycosylation is present at Asn164. 2 disulfide bridges follow: Cys195–Cys272 and Cys226–Cys231. N-linked (GlcNAc...) asparagine glycosylation is found at Asn291 and Asn327. Positions 461, 521, 523, and 527 each coordinate a 2-acyl-6-[6-phosphoethanolamine-alpha-D-mannosyl-(1-&gt;2)-6-phosphoethanolamine-alpha-D-mannosyl-(1-&gt;6)-2-phosphoethanolamine-alpha-D-mannosyl-(1-&gt;4)-alpha-D-glucosaminyl]-1-(1-radyl,2-acyl-sn-glycero-3-phospho)-1D-myo-inositol. A helical membrane pass occupies residues 526 to 548; that stretch reads YNVICLTCTVVAVCYGSFYNLLT. Residues 549–578 are Cytoplasmic-facing; that stretch reads RTFHIEEPRTGGLAKRLANLIRRARGVPPL.

It belongs to the PIGT family. Heteropentamer. Part of the GPI-anchor transamidase complex, consisting of PIGK, PIGT, PIGS, PIGU and GAA1. Post-translationally, the disulfide bond between PIGK/GPI8 and PIGT is important for normal enzyme activity.

Its subcellular location is the endoplasmic reticulum membrane. Its pathway is glycolipid biosynthesis; glycosylphosphatidylinositol-anchor biosynthesis. Its function is as follows. Component of the glycosylphosphatidylinositol-anchor (GPI-anchor) transamidase (GPI-T) complex that catalyzes the formation of the linkage between a proprotein and a GPI-anchor and participates in GPI anchored protein biosynthesis. May play a crucial role in GPI-T complex assembly in the luminal layer. Binds GPI-anchor. The chain is GPI-anchor transamidase component PIGT from Homo sapiens (Human).